The following is a 451-amino-acid chain: uncharacterized protein (451 aa).

The 59-residue stretch at 2 to 60 (VVKVKQKIPLKIKRMGINGEGIGFYQKTLVFVPGALKGEDIFCQITAVKRNFAEAKLLT) folds into the TRAM domain. [4Fe-4S] cluster-binding residues include C73, C79, C82, and C162. Residues Q283, Y312, D333, and D381 each contribute to the S-adenosyl-L-methionine site. C408 functions as the Nucleophile in the catalytic mechanism.

The protein belongs to the class I-like SAM-binding methyltransferase superfamily. RNA M5U methyltransferase family.

This is an uncharacterized protein from Streptococcus pyogenes serotype M1.